The chain runs to 439 residues: Type I secretion system membrane fusion protein PrsE (439 aa).

Residues 20 to 40 (LIGVSVLALALVAGVGGWAAT) traverse the membrane as a helical segment.

It belongs to the membrane fusion protein (MFP) (TC 8.A.1) family. In terms of assembly, part of a type I secretion system composed of PrsD and PrsE.

The protein localises to the cell inner membrane. Mediates secretion of glycanase ExsH. The polypeptide is Type I secretion system membrane fusion protein PrsE (prsE) (Rhizobium meliloti (strain 1021) (Ensifer meliloti)).